The sequence spans 98 residues: NADH-ubiquinone oxidoreductase chain 4L (98 aa).

The next 3 membrane-spanning stretches (helical) occupy residues 1-21 (MTLI…GLLM), 29-49 (ALLC…LTIL), and 61-81 (IILL…LVMV).

The protein belongs to the complex I subunit 4L family. In terms of assembly, core subunit of respiratory chain NADH dehydrogenase (Complex I) which is composed of 45 different subunits.

The protein resides in the mitochondrion inner membrane. It carries out the reaction a ubiquinone + NADH + 5 H(+)(in) = a ubiquinol + NAD(+) + 4 H(+)(out). Core subunit of the mitochondrial membrane respiratory chain NADH dehydrogenase (Complex I) which catalyzes electron transfer from NADH through the respiratory chain, using ubiquinone as an electron acceptor. Part of the enzyme membrane arm which is embedded in the lipid bilayer and involved in proton translocation. The sequence is that of NADH-ubiquinone oxidoreductase chain 4L (MT-ND4L) from Megaptera novaeangliae (Humpback whale).